The chain runs to 183 residues: Beta-defensin 129 (183 aa).

The N-terminal stretch at 1–19 (MKLLFPIFASLMLQYQVNT) is a signal peptide. Cystine bridges form between cysteine 27–cysteine 53, cysteine 34–cysteine 48, and cysteine 38–cysteine 54. The tract at residues 141 to 183 (TATSTKSNTKESRDSATASSPPAPPPPNILPTPSLELEEAEEQ) is disordered. A compositionally biased stretch (pro residues) spans 161 to 170 (PPAPPPPNIL).

The protein belongs to the beta-defensin family.

Its subcellular location is the secreted. Has antibacterial activity. The sequence is that of Beta-defensin 129 (DEFB129) from Gorilla gorilla gorilla (Western lowland gorilla).